Consider the following 372-residue polypeptide: Peptide chain release factor 2 (372 aa).

N5-methylglutamine is present on Q253.

The protein belongs to the prokaryotic/mitochondrial release factor family. Methylated by PrmC. Methylation increases the termination efficiency of RF2.

The protein localises to the cytoplasm. Peptide chain release factor 2 directs the termination of translation in response to the peptide chain termination codons UGA and UAA. The protein is Peptide chain release factor 2 of Nocardia farcinica (strain IFM 10152).